Here is a 364-residue protein sequence, read N- to C-terminus: BOLA class I histocompatibility antigen, alpha chain BL3-7 (364 aa).

The N-terminal stretch at 1–27 (MRVMRVMRPRTLLLLLSGVLVLTETLA) is a signal peptide. The segment at 28 to 117 (GSHSLRYFYT…LRGYYNQSET (90 aa)) is alpha-1. Topologically, residues 28 to 310 (GSHSLRYFYT…WEPPQTSFLI (283 aa)) are extracellular. Asparagine 113 carries N-linked (GlcNAc...) asparagine glycosylation. The segment at 118–209 (GSHNIQAMYG…ENGKDTLLRA (92 aa)) is alpha-2. 2 disulfide bridges follow: cysteine 128-cysteine 191 and cysteine 230-cysteine 286. Residues 210 to 301 (DPPKAHVTHH…GLQEPLTLRW (92 aa)) form an alpha-3 region. The region spanning 212 to 298 (PKAHVTHHSI…QHEGLQEPLT (87 aa)) is the Ig-like C1-type domain. The connecting peptide stretch occupies residues 302-310 (EPPQTSFLI). The chain crosses the membrane as a helical span at residues 311–331 (MGIIVGLVLLVVALVAGAVIW). Over 332-364 (RKKRSGEKGRIYTQAASSDSAQGSDVSLTVPKV) the chain is Cytoplasmic. A phosphoserine mark is found at serine 355 and serine 358.

The protein belongs to the MHC class I family. As to quaternary structure, heterodimer of an alpha chain and a beta chain (beta-2-microglobulin).

The protein resides in the membrane. In terms of biological role, involved in the presentation of foreign antigens to the immune system. In Bos taurus (Bovine), this protein is BOLA class I histocompatibility antigen, alpha chain BL3-7.